The following is a 358-amino-acid chain: UDP-N-acetylglucosamine--N-acetylmuramyl-(pentapeptide) pyrophosphoryl-undecaprenol N-acetylglucosamine transferase (358 aa).

UDP-N-acetyl-alpha-D-glucosamine is bound by residues 11 to 13 (TGG), N122, R161, S189, I243, 262 to 267 (ALTVCE), and Q288.

The protein belongs to the glycosyltransferase 28 family. MurG subfamily.

It is found in the cell inner membrane. It carries out the reaction di-trans,octa-cis-undecaprenyl diphospho-N-acetyl-alpha-D-muramoyl-L-alanyl-D-glutamyl-meso-2,6-diaminopimeloyl-D-alanyl-D-alanine + UDP-N-acetyl-alpha-D-glucosamine = di-trans,octa-cis-undecaprenyl diphospho-[N-acetyl-alpha-D-glucosaminyl-(1-&gt;4)]-N-acetyl-alpha-D-muramoyl-L-alanyl-D-glutamyl-meso-2,6-diaminopimeloyl-D-alanyl-D-alanine + UDP + H(+). The protein operates within cell wall biogenesis; peptidoglycan biosynthesis. In terms of biological role, cell wall formation. Catalyzes the transfer of a GlcNAc subunit on undecaprenyl-pyrophosphoryl-MurNAc-pentapeptide (lipid intermediate I) to form undecaprenyl-pyrophosphoryl-MurNAc-(pentapeptide)GlcNAc (lipid intermediate II). In Coxiella burnetii (strain Dugway 5J108-111), this protein is UDP-N-acetylglucosamine--N-acetylmuramyl-(pentapeptide) pyrophosphoryl-undecaprenol N-acetylglucosamine transferase.